Reading from the N-terminus, the 859-residue chain is Envelope glycoprotein (859 aa).

Positions 1–6 (MVSIAF) are excised as a propeptide. Topologically, residues 7–614 (YGGIPGGIST…KDLWSHIGNW (608 aa)) are extracellular. N40, N112, N141, N148, N186, N214, N233, N244, N340, N368, N399, N406, N411, and N422 each carry an N-linked (GlcNAc...) asparagine; by host glycan. Positions 446–466 (FGISAIVAAIVAATAIAASAT) are fusion peptide. Residues N483 and N490 are each glycosylated (N-linked (GlcNAc...) asparagine; by host). Positions 498-513 (LIERQIKILYAMILQT) are immunosuppression. N550 and N557 each carry an N-linked (GlcNAc...) asparagine; by host glycan. Coiled-coil stretches lie at residues 576-624 (ILTT…SIIK) and 663-699 (KKFHHKHASREDTWDQAQHSIHLAGVTGGSGDKYYKQ). A helical transmembrane segment spans residues 615-635 (IPGLGASIIKYIVMFLLIYLL). Over 636 to 859 (LTSSPKILRA…TSHVSMPQYV (224 aa)) the chain is Cytoplasmic. Residues 745–764 (AAINEHKNGSGGNNPHQGSL) form a disordered region.

The mature envelope protein (Env) consists of a trimer of SU-TM heterodimers attached by noncovalent interactions or by a labile interchain disulfide bond. Specific enzymatic cleavages in vivo yield mature proteins. Envelope glycoproteins are synthesized as an inactive precursor that is N-glycosylated and processed likely by host cell furin or by a furin-like protease in the Golgi to yield the mature SU and TM proteins. The cleavage site between SU and TM requires the minimal sequence [KR]-X-[KR]-R.

Its subcellular location is the virion membrane. The protein resides in the host cell membrane. Its function is as follows. The surface protein (SU) attaches the virus to the host cell by binding to its receptor. This interaction triggers the refolding of the transmembrane protein (TM) and is thought to activate its fusogenic potential by unmasking its fusion peptide. Fusion occurs at the host cell plasma membrane. Functionally, the transmembrane protein (TM) acts as a class I viral fusion protein. Under the current model, the protein has at least 3 conformational states: pre-fusion native state, pre-hairpin intermediate state, and post-fusion hairpin state. During viral and target cell membrane fusion, the coiled coil regions (heptad repeats) assume a trimer-of-hairpins structure, positioning the fusion peptide in close proximity to the C-terminal region of the ectodomain. The formation of this structure appears to drive apposition and subsequent fusion of viral and target cell membranes. Membranes fusion leads to delivery of the nucleocapsid into the cytoplasm. This chain is Envelope glycoprotein (env), found in Equus asinus (Donkey).